The chain runs to 452 residues: 1,4-beta-D-glucan cellobiohydrolase A (452 aa).

A signal peptide spans 1 to 17 (MHQRALLFSALLTAVRA). Asn62 carries N-linked (GlcNAc...) asparagine glycosylation. The active-site Nucleophile is Glu227. The active-site Proton donor is the Glu232. Asn285, Asn335, Asn402, and Asn445 each carry an N-linked (GlcNAc...) asparagine glycan.

The protein belongs to the glycosyl hydrolase 7 (cellulase C) family.

It localises to the secreted. The catalysed reaction is Hydrolysis of (1-&gt;4)-beta-D-glucosidic linkages in cellulose and cellotetraose, releasing cellobiose from the non-reducing ends of the chains.. The biological conversion of cellulose to glucose generally requires three types of hydrolytic enzymes: (1) Endoglucanases which cut internal beta-1,4-glucosidic bonds; (2) Exocellobiohydrolases that cut the disaccharide cellobiose from the non-reducing end of the cellulose polymer chain; (3) Beta-1,4-glucosidases which hydrolyze the cellobiose and other short cello-oligosaccharides to glucose. This Aspergillus niger protein is 1,4-beta-D-glucan cellobiohydrolase A (cbhA).